The sequence spans 483 residues: Regulatory protein ViaA (483 aa).

Belongs to the ViaA family. In terms of assembly, homodimer. Interacts with RavA.

The protein resides in the cytoplasm. In terms of biological role, component of the RavA-ViaA chaperone complex, which may act on the membrane to optimize the function of some of the respiratory chains. ViaA stimulates the ATPase activity of RavA. This chain is Regulatory protein ViaA, found in Escherichia fergusonii (strain ATCC 35469 / DSM 13698 / CCUG 18766 / IAM 14443 / JCM 21226 / LMG 7866 / NBRC 102419 / NCTC 12128 / CDC 0568-73).